The following is a 210-amino-acid chain: Histone H1A (210 aa).

Disordered stretches follow at residues 1 to 49 and 101 to 210; these read MAEA…VSEQ and KGSG…PKKK. 2 stretches are compositionally biased toward low complexity: residues 26-45 and 129-142; these read KKAA…SGPS and PLAA…AAAK. The H15 domain maps to 42-113; that stretch reads SGPSVSEQIV…GASGSFKLNK (72 aa). 2 stretches are compositionally biased toward basic residues: residues 143–153 and 160–180; these read KTAKSPKKPKK and SPKK…KTAV. Positions 181 to 192 are enriched in low complexity; sequence KPKVAAKSPAKA. Positions 193–210 are enriched in basic residues; it reads KAAKPKVAKAKKAAPKKK.

The protein belongs to the histone H1/H5 family.

The protein resides in the nucleus. It is found in the chromosome. Functionally, histones H1 are necessary for the condensation of nucleosome chains into higher-order structures. This Xenopus laevis (African clawed frog) protein is Histone H1A.